The primary structure comprises 297 residues: Large ribosomal subunit protein uL3 (297 aa).

Disordered regions lie at residues 124 to 143 and 258 to 297; these read NQKI…PVRQ and MKEK…DKGE.

Belongs to the universal ribosomal protein uL3 family. In terms of assembly, part of the 50S ribosomal subunit. Forms a cluster with proteins L14 and L19.

Its function is as follows. One of the primary rRNA binding proteins, it binds directly near the 3'-end of the 23S rRNA, where it nucleates assembly of the 50S subunit. The protein is Large ribosomal subunit protein uL3 of Mycoplasma mobile (strain ATCC 43663 / 163K / NCTC 11711) (Mesomycoplasma mobile).